The sequence spans 600 residues: ATP-dependent RNA helicase DDX55 (600 aa).

The short motif at 9-37 (WESLPVPLHPQVLGALRELGFPYMTPVQS) is the Q motif element. The Helicase ATP-binding domain maps to 40-223 (IPLFMRNKDV…RAGLRNPVRV (184 aa)). 53–60 (AVTGSGKT) is a binding site for ATP. Residues 171–174 (DEAD) carry the DEAD box motif. Residues 254-402 (KFNQLVHFLR…EMKPQRNTAD (149 aa)) form the Helicase C-terminal domain. Positions 500 to 513 (EQQRREKTENEGRR) are enriched in basic and acidic residues. Residues 500–550 (EQQRREKTENEGRRKFIKNKAWSKQKAKKEKKKKMNEKRKREEGSDIEDED) form a disordered region. The span at 514–537 (KFIKNKAWSKQKAKKEKKKKMNEK) shows a compositional bias: basic residues. The important for nuclear localization stretch occupies residues 533–562 (KMNEKRKREEGSDIEDEDMEELLNDTRLLK). 2 positions are modified to phosphoserine: S544 and S594.

Belongs to the DEAD box helicase family. DDX55/SPB4 subfamily. In terms of assembly, interacts with 28S rRNA. Interacts with double-stranded RNA substrates in vitro; the interaction stimulates ATPase activity.

The protein localises to the nucleus. The protein resides in the nucleoplasm. It carries out the reaction ATP + H2O = ADP + phosphate + H(+). Probable ATP-binding RNA helicase. Has ATPase activity and is involved in the maturation of precursor large subunit rRNAs. This is ATP-dependent RNA helicase DDX55 from Homo sapiens (Human).